A 71-amino-acid chain; its full sequence is UPF0352 protein Asuc_0778 (71 aa).

Belongs to the UPF0352 family.

This Actinobacillus succinogenes (strain ATCC 55618 / DSM 22257 / CCUG 43843 / 130Z) protein is UPF0352 protein Asuc_0778.